The primary structure comprises 226 residues: MADGKGPVVALVPAAGQGVRLGENRPKAFVDLGGTTMLTRAVDGLLQSGAVDRVVVIVPEELVESTRTLLPGEVTVVAGGSERTDSVRAGLAVADDADYVLVHDAARALTPPSLIARVVEELRCGRNAVIPVLPVTDTIKTVDVLGAVTGTPERSELRAVQTPQGFTAELLRRAYAAADGIATDDAGLVERLGERVRSIVGEPTAFKITTPLDLVLARALVEEGAH.

It belongs to the IspD/TarI cytidylyltransferase family. IspD subfamily.

The catalysed reaction is 2-C-methyl-D-erythritol 4-phosphate + CTP + H(+) = 4-CDP-2-C-methyl-D-erythritol + diphosphate. It participates in isoprenoid biosynthesis; isopentenyl diphosphate biosynthesis via DXP pathway; isopentenyl diphosphate from 1-deoxy-D-xylulose 5-phosphate: step 2/6. In terms of biological role, catalyzes the formation of 4-diphosphocytidyl-2-C-methyl-D-erythritol from CTP and 2-C-methyl-D-erythritol 4-phosphate (MEP). This is 2-C-methyl-D-erythritol 4-phosphate cytidylyltransferase from Rhodococcus jostii (strain RHA1).